The sequence spans 136 residues: uncharacterized protein (136 aa).

2 disordered regions span residues 23 to 44 and 56 to 95; these read QESL…KEDN and DGVI…ESAR. A compositionally biased stretch (low complexity) spans 61–79; that stretch reads SEEGCSSSGEKENSGLCSE. Residues 80-91 show a composition bias toward acidic residues; that stretch reads ESSEEDPEEAEE.

This is an uncharacterized protein from Saccharomyces cerevisiae (strain ATCC 204508 / S288c) (Baker's yeast).